A 610-amino-acid polypeptide reads, in one-letter code: Elongation factor 4 (610 aa).

The tr-type G domain occupies 11–193; it reads EKIRNFSIIA…QIVEKVPAPT (183 aa). Residues 23 to 28 and 140 to 143 contribute to the GTP site; these read DHGKST and NKID.

It belongs to the TRAFAC class translation factor GTPase superfamily. Classic translation factor GTPase family. LepA subfamily.

Its subcellular location is the cell membrane. It carries out the reaction GTP + H2O = GDP + phosphate + H(+). In terms of biological role, required for accurate and efficient protein synthesis under certain stress conditions. May act as a fidelity factor of the translation reaction, by catalyzing a one-codon backward translocation of tRNAs on improperly translocated ribosomes. Back-translocation proceeds from a post-translocation (POST) complex to a pre-translocation (PRE) complex, thus giving elongation factor G a second chance to translocate the tRNAs correctly. Binds to ribosomes in a GTP-dependent manner. The sequence is that of Elongation factor 4 from Streptococcus pyogenes serotype M12 (strain MGAS9429).